A 43-amino-acid chain; its full sequence is Neurotrophic factor BDNF (43 aa).

The protein belongs to the NGF-beta family.

The protein resides in the secreted. Promotes the survival of neuronal populations that are all located either in the central nervous system or directly connected to it. This Macrovipera lebetinus (Levantine viper) protein is Neurotrophic factor BDNF (BDNF).